The primary structure comprises 355 residues: Serum paraoxonase/arylesterase 1 (355 aa).

An intrachain disulfide couples Cys42 to Cys353. Ca(2+) is bound by residues Glu53 and Asp54. Catalysis depends on His115, which acts as the Proton acceptor. The Ca(2+) site is built by Ile117, Asn168, Asp169, and Asn224. Asn253 is a glycosylation site (N-linked (GlcNAc...) asparagine). Ca(2+) is bound by residues Asp269 and Asn270. Residues Asn270 and Asn324 are each glycosylated (N-linked (GlcNAc...) asparagine).

This sequence belongs to the paraoxonase family. In terms of assembly, homodimer. Interacts with CLU. Requires Ca(2+) as cofactor. Post-translationally, the signal sequence is not cleaved. Plasma, liver, kidney, heart, brain, small intestine and lung. In the plasma, associated with HDL.

Its subcellular location is the secreted. The protein localises to the extracellular space. The catalysed reaction is a phenyl acetate + H2O = a phenol + acetate + H(+). It catalyses the reaction An aryl dialkyl phosphate + H2O = dialkyl phosphate + an aryl alcohol.. It carries out the reaction an N-acyl-L-homoserine lactone + H2O = an N-acyl-L-homoserine + H(+). Hydrolyzes the toxic metabolites of a variety of organophosphorus insecticides. Capable of hydrolyzing a broad spectrum of organophosphate substrates and lactones, and a number of aromatic carboxylic acid esters. Mediates an enzymatic protection of low density lipoproteins against oxidative modification. This is Serum paraoxonase/arylesterase 1 (Pon1) from Mus musculus (Mouse).